The chain runs to 548 residues: C-type lectin domain family 4 member F (548 aa).

Residues 1–42 are Cytoplasmic-facing; sequence MKEAELNRDMARYCTDNQCVSLQPQGLGPKSAALMAPRTLRH. A helical; Signal-anchor for type II membrane protein membrane pass occupies residues 43-69; it reads VQVILALMVVTVIFSLLALFVVASQPW. Over 70–548 the chain is Extracellular; that stretch reads RPEWNKEPPS…STGWSAARVG (479 aa). N-linked (GlcNAc...) asparagine glycosylation is found at asparagine 86, asparagine 92, asparagine 115, asparagine 132, asparagine 209, and asparagine 255. A C-type lectin domain is found at 438-538; sequence KFCTSQGAHL…GSSYPWVCKK (101 aa). 2 disulfides stabilise this stretch: cysteine 440/cysteine 536 and cysteine 516/cysteine 528.

In terms of tissue distribution, kupffer cells.

Its subcellular location is the membrane. Functionally, receptor with an affinity for galactose and fucose. Could be involved in endocytosis. This is C-type lectin domain family 4 member F (Clec4f) from Mus musculus (Mouse).